The sequence spans 131 residues: Small ribosomal subunit protein uS8 (131 aa).

It belongs to the universal ribosomal protein uS8 family. Part of the 30S ribosomal subunit. Contacts proteins S5 and S12.

Functionally, one of the primary rRNA binding proteins, it binds directly to 16S rRNA central domain where it helps coordinate assembly of the platform of the 30S subunit. The sequence is that of Small ribosomal subunit protein uS8 from Geobacillus stearothermophilus (Bacillus stearothermophilus).